A 310-amino-acid chain; its full sequence is Ribosomal RNA small subunit methyltransferase H (310 aa).

S-adenosyl-L-methionine is bound by residues 33–35, Asp53, Phe79, Asp100, and Gln107; that span reads AGH.

This sequence belongs to the methyltransferase superfamily. RsmH family.

It localises to the cytoplasm. It catalyses the reaction cytidine(1402) in 16S rRNA + S-adenosyl-L-methionine = N(4)-methylcytidine(1402) in 16S rRNA + S-adenosyl-L-homocysteine + H(+). Its function is as follows. Specifically methylates the N4 position of cytidine in position 1402 (C1402) of 16S rRNA. This chain is Ribosomal RNA small subunit methyltransferase H, found in Clostridium perfringens (strain 13 / Type A).